The primary structure comprises 101 residues: MNNTEFSKIAETTIAYIADKIEEQDKEASIDVDLQGDILNLDTDKGIYVINKQSAAKEIWLSSPVSGPYHFFYEQGKWKNKIGLELMAILTEELNIKFDNI.

Belongs to the frataxin family.

In terms of biological role, involved in iron-sulfur (Fe-S) cluster assembly. May act as a regulator of Fe-S biogenesis. The protein is Iron-sulfur cluster assembly protein CyaY of Rickettsia felis (strain ATCC VR-1525 / URRWXCal2) (Rickettsia azadi).